Reading from the N-terminus, the 95-residue chain is Complement inhibitor RaCI5 (95 aa).

The signal sequence occupies residues 1–21 (MNAVIVLCVTISAVLIHQCYS). 3 disulfides stabilise this stretch: cysteine 35–cysteine 59, cysteine 40–cysteine 61, and cysteine 55–cysteine 76.

It belongs to the RaCI family. Expressed in salivary glands.

The protein resides in the secreted. Its function is as follows. Complement inhibitor. Prevents complement-mediated C5 activation by binding to C5. Binds C5 at a different binding site than the other tick complement inhibitors OmCI and CirpT1, and the drug eculizumab. The polypeptide is Complement inhibitor RaCI5 (Rhipicephalus appendiculatus (Brown ear tick)).